Consider the following 520-residue polypeptide: MKPENFRADTKRPLTGEEYLKSLQDGREIYIYGERVKDVTTHPAFRNAAASVAQLYDALHNPELQNTLCWGTDTGSGGYTHKFFRVAKSADDLRQQRDAIAEWSRLSYGWMGRTPDYKAAFGGGLGANPGFYGQFEQNARDWYTRIQETGLYFNHAIVNPPIDRHKPADEVKDVYIKLEKETDAGIIVSGAKVVATNSALTHYNMIGFGSAQVMGENPDFALMFVAPMDAEGDKLISRASYELVAGATGSPYDYPLSSRFDENDAILVMDNVLIPWENVLIYRDFDRCRRWTMEGGFARMYPLQACVRLAVKLDFITALLKRSLECTGTLEFRGVQAELGEVVAWRNMFWALSDSMCAEATPWVNGAYLPDHAALQTYRVMAPMPYAKIKNIIERSVTSGLIYLPSSARDLNNPQINDTLAKYVRGSNGMDHVERIKILKLMWDAIGSEFGGCHELYEINYSGSQDEIRLQCLRQAQSSGNMDKMMAMVDRCLSEYDQNGWTVPHLHNNTDINMLDKLLK.

It belongs to the FADH(2)-utilizing monooxygenase family. 4-HPA 3-monooxygenase consists of a reductase component HpaC and an oxygenase component HpaB.

The enzyme catalyses 4-hydroxyphenylacetate + FADH2 + O2 = 3,4-dihydroxyphenylacetate + FAD + H2O + H(+). It functions in the pathway aromatic compound metabolism; 4-hydroxyphenylacetate degradation; pyruvate and succinate semialdehyde from 4-hydroxyphenylacetate: step 1/7. Its function is as follows. Utilizes FADH(2) supplied by HpaC or by another flavin reductase, to catalyze the hydroxylation of 4-hydroxyphenylacetic acid, leading to the production of 3,4-DHPA. In Klebsiella oxytoca, this protein is 4-hydroxyphenylacetate 3-monooxygenase oxygenase component (hpaB).